Here is a 465-residue protein sequence, read N- to C-terminus: L-seryl-tRNA(Sec) selenium transferase (465 aa).

Lys-294 carries the post-translational modification N6-(pyridoxal phosphate)lysine.

Belongs to the SelA family. The cofactor is pyridoxal 5'-phosphate.

Its subcellular location is the cytoplasm. It catalyses the reaction L-seryl-tRNA(Sec) + selenophosphate + H(+) = L-selenocysteinyl-tRNA(Sec) + phosphate. It participates in aminoacyl-tRNA biosynthesis; selenocysteinyl-tRNA(Sec) biosynthesis; selenocysteinyl-tRNA(Sec) from L-seryl-tRNA(Sec) (bacterial route): step 1/1. Its function is as follows. Converts seryl-tRNA(Sec) to selenocysteinyl-tRNA(Sec) required for selenoprotein biosynthesis. The protein is L-seryl-tRNA(Sec) selenium transferase of Maridesulfovibrio salexigens (strain ATCC 14822 / DSM 2638 / NCIMB 8403 / VKM B-1763) (Desulfovibrio salexigens).